Here is a 236-residue protein sequence, read N- to C-terminus: 5'-methylthioadenosine/S-adenosylhomocysteine nucleosidase (236 aa).

Catalysis depends on glutamate 12, which acts as the Proton acceptor. Substrate contacts are provided by residues glycine 78, isoleucine 153, and 174-175; that span reads ME. Residue aspartate 198 is the Proton donor of the active site.

It belongs to the PNP/UDP phosphorylase family. MtnN subfamily.

The enzyme catalyses S-adenosyl-L-homocysteine + H2O = S-(5-deoxy-D-ribos-5-yl)-L-homocysteine + adenine. It catalyses the reaction S-methyl-5'-thioadenosine + H2O = 5-(methylsulfanyl)-D-ribose + adenine. It carries out the reaction 5'-deoxyadenosine + H2O = 5-deoxy-D-ribose + adenine. Its pathway is amino-acid biosynthesis; L-methionine biosynthesis via salvage pathway; S-methyl-5-thio-alpha-D-ribose 1-phosphate from S-methyl-5'-thioadenosine (hydrolase route): step 1/2. Catalyzes the irreversible cleavage of the glycosidic bond in both 5'-methylthioadenosine (MTA) and S-adenosylhomocysteine (SAH/AdoHcy) to adenine and the corresponding thioribose, 5'-methylthioribose and S-ribosylhomocysteine, respectively. Also cleaves 5'-deoxyadenosine, a toxic by-product of radical S-adenosylmethionine (SAM) enzymes, into 5-deoxyribose and adenine. The sequence is that of 5'-methylthioadenosine/S-adenosylhomocysteine nucleosidase from Shewanella sp. (strain MR-7).